A 633-amino-acid polypeptide reads, in one-letter code: DNA mismatch repair protein MutL (633 aa).

2 disordered regions span residues 337 to 364 (RPDD…GEFG) and 383 to 405 (VGWS…TRPE). Gly residues predominate over residues 385–396 (WSGGSSASGGSS).

This sequence belongs to the DNA mismatch repair MutL/HexB family.

This protein is involved in the repair of mismatches in DNA. It is required for dam-dependent methyl-directed DNA mismatch repair. May act as a 'molecular matchmaker', a protein that promotes the formation of a stable complex between two or more DNA-binding proteins in an ATP-dependent manner without itself being part of a final effector complex. The polypeptide is DNA mismatch repair protein MutL (Pseudomonas aeruginosa (strain UCBPP-PA14)).